The primary structure comprises 245 residues: MSQTEPKDQDPVFQLKGSMLAITVLELSRNDLDSLDRQLAAKVAQAPNFFSNAPLVLALDKLPPSEGAVDLPGLMRVCRQHGLRTLAIRASRIEDIAAAIAIDIPVLPPSGARERPLESAEPVAPKKPEKPPEPTVKPTRVITTPVRGGQQIYAQGGDLVVVSSVSPGAELLADGNIHVYGPMRGRALAGVKGDTKARIFCQQLSAELISIAGHYKVSEDLRRDPMWGSGVQVSLSGDVLNIIRL.

The segment covering 112-132 (ARERPLESAEPVAPKKPEKPP) has biased composition (basic and acidic residues). A disordered region spans residues 112–140 (ARERPLESAEPVAPKKPEKPPEPTVKPTR).

It belongs to the MinC family. As to quaternary structure, interacts with MinD and FtsZ.

In terms of biological role, cell division inhibitor that blocks the formation of polar Z ring septums. Rapidly oscillates between the poles of the cell to destabilize FtsZ filaments that have formed before they mature into polar Z rings. Prevents FtsZ polymerization. The polypeptide is Probable septum site-determining protein MinC (Pseudomonas fluorescens (strain Pf0-1)).